The sequence spans 71 residues: Bowman-Birk type trypsin inhibitor (71 aa).

6 disulfide bridges follow: cysteine 10-cysteine 67, cysteine 11-cysteine 27, cysteine 14-cysteine 63, cysteine 17-cysteine 25, cysteine 35-cysteine 42, and cysteine 39-cysteine 55.

The protein belongs to the Bowman-Birk serine protease inhibitor family.

In terms of biological role, inhibits trypsin but not chymotrypsin. This is Bowman-Birk type trypsin inhibitor from Triticum aestivum (Wheat).